The primary structure comprises 158 residues: SsrA-binding protein (158 aa).

The interval 131–158 (YDKRQTLRERQDKREADRAMSSHRRLGE) is disordered.

It belongs to the SmpB family.

Its subcellular location is the cytoplasm. Required for rescue of stalled ribosomes mediated by trans-translation. Binds to transfer-messenger RNA (tmRNA), required for stable association of tmRNA with ribosomes. tmRNA and SmpB together mimic tRNA shape, replacing the anticodon stem-loop with SmpB. tmRNA is encoded by the ssrA gene; the 2 termini fold to resemble tRNA(Ala) and it encodes a 'tag peptide', a short internal open reading frame. During trans-translation Ala-aminoacylated tmRNA acts like a tRNA, entering the A-site of stalled ribosomes, displacing the stalled mRNA. The ribosome then switches to translate the ORF on the tmRNA; the nascent peptide is terminated with the 'tag peptide' encoded by the tmRNA and targeted for degradation. The ribosome is freed to recommence translation, which seems to be the essential function of trans-translation. This chain is SsrA-binding protein, found in Clavibacter michiganensis subsp. michiganensis (strain NCPPB 382).